Consider the following 97-residue polypeptide: MICOS complex subunit MIC12 (97 aa).

A helical membrane pass occupies residues Leu7–Tyr24.

Belongs to the MICOS complex subunit Mic12 family. As to quaternary structure, component of the mitochondrial contact site and cristae organizing system (MICOS) complex.

It localises to the mitochondrion inner membrane. Its function is as follows. Component of the MICOS complex, a large protein complex of the mitochondrial inner membrane that plays crucial roles in the maintenance of crista junctions, inner membrane architecture, and formation of contact sites to the outer membrane. This chain is MICOS complex subunit MIC12 (AIM5), found in Zygosaccharomyces rouxii (strain ATCC 2623 / CBS 732 / NBRC 1130 / NCYC 568 / NRRL Y-229).